We begin with the raw amino-acid sequence, 1915 residues long: Ankyrin repeat domain-containing protein 36A (1915 aa).

ANK repeat units lie at residues 31 to 60 (YHLK…DANK), 64 to 93 (KERT…ELNL), 97 to 126 (EDRT…NPNI), 130 to 159 (FGRT…NIEE), 163 to 192 (CEYQ…NVNA), and 196 to 225 (LGRS…DVLS). 5 disordered regions span residues 261–331 (PINS…DEQK), 470–619 (ATGQ…QKQS), 639–663 (MGGG…DKTD), 676–1203 (LQCG…KATS), and 1285–1304 (KDVQ…SEGE). 2 stretches are compositionally biased toward polar residues: residues 262–272 (INSNPVSSQKQ) and 297–306 (KSGTVSSQKQ). The span at 505 to 521 (SLTSSEESSERPPLSTL) shows a compositional bias: low complexity. Basic and acidic residues-rich tracts occupy residues 551–562 (PAEKATSDDKDS) and 585–596 (PAEKATSDEKDS). 2 stretches are compositionally biased toward polar residues: residues 597-619 (VSNI…QKQS) and 645-657 (GTVS…ASKA). 7 stretches are compositionally biased toward basic and acidic residues: residues 806–815 (RENKDGEKSR), 874–883 (RENKDGEKSR), 931–951 (SDEK…EISR), 976–985 (RENKDGEKSR), 1044–1053 (RENKDGEKSR), 1100–1121 (TSDE…EKSR), and 1134–1152 (ICDK…KDEQ). Residues 1175-1196 (VSNIPTEIKDGQQSGTVSSQKQ) are compositionally biased toward polar residues. Coiled-coil stretches lie at residues 1383–1466 (IKLK…TEEQ), 1504–1531 (KEDL…IKNQ), 1573–1614 (LAAL…ARCD), and 1727–1814 (NMLL…KRDD). Positions 1489-1508 (KTGGNNSNQVSETDEKEDLL) are disordered.

This sequence belongs to the ANKRD36 family.

This is Ankyrin repeat domain-containing protein 36A (ANKRD36) from Homo sapiens (Human).